Consider the following 90-residue polypeptide: MANSAQARKRARQAAKANSHNSALRSKFRTAIKAVRKAVDAGDQAKAAELFKAAVKTIDTIADKKIVHKNKAARSKSRLAAAVKGLQAAA.

The disordered stretch occupies residues 1 to 25 (MANSAQARKRARQAAKANSHNSALR).

The protein belongs to the bacterial ribosomal protein bS20 family.

Binds directly to 16S ribosomal RNA. The polypeptide is Small ribosomal subunit protein bS20 (Burkholderia multivorans (strain ATCC 17616 / 249)).